Reading from the N-terminus, the 634-residue chain is Chaperone protein HtpG (634 aa).

The segment at 1-342 is a; substrate-binding; the sequence is MTVDTDKQTL…SADLSLNVSR (342 aa). Residues 343-559 form a b region; sequence EILQSGPVVD…QGDLGLQMRQ (217 aa). Residues 560 to 634 form a c region; that stretch reads LLEASGQAVP…LNKLLLELSA (75 aa).

It belongs to the heat shock protein 90 family. In terms of assembly, homodimer.

The protein resides in the cytoplasm. Functionally, molecular chaperone. Has ATPase activity. This chain is Chaperone protein HtpG, found in Xanthomonas campestris pv. campestris (strain ATCC 33913 / DSM 3586 / NCPPB 528 / LMG 568 / P 25).